Reading from the N-terminus, the 96-residue chain is Defensin-like protein 151 (96 aa).

The first 29 residues, 1 to 29 (MKKPSQLSATILTIFVILAIGVMVKETLG), serve as a signal peptide directing secretion. 4 disulfides stabilise this stretch: Cys35-Cys88, Cys48-Cys68, Cys53-Cys82, and Cys57-Cys84.

Belongs to the DEFL family.

It localises to the secreted. This Arabidopsis thaliana (Mouse-ear cress) protein is Defensin-like protein 151 (LCR17).